A 280-amino-acid polypeptide reads, in one-letter code: Aspartate/glutamate leucyltransferase (280 aa).

It belongs to the R-transferase family. Bpt subfamily.

It localises to the cytoplasm. The catalysed reaction is N-terminal L-glutamyl-[protein] + L-leucyl-tRNA(Leu) = N-terminal L-leucyl-L-glutamyl-[protein] + tRNA(Leu) + H(+). It carries out the reaction N-terminal L-aspartyl-[protein] + L-leucyl-tRNA(Leu) = N-terminal L-leucyl-L-aspartyl-[protein] + tRNA(Leu) + H(+). Its function is as follows. Functions in the N-end rule pathway of protein degradation where it conjugates Leu from its aminoacyl-tRNA to the N-termini of proteins containing an N-terminal aspartate or glutamate. The protein is Aspartate/glutamate leucyltransferase of Cereibacter sphaeroides (strain ATCC 17023 / DSM 158 / JCM 6121 / CCUG 31486 / LMG 2827 / NBRC 12203 / NCIMB 8253 / ATH 2.4.1.) (Rhodobacter sphaeroides).